Consider the following 128-residue polypeptide: Small ribosomal subunit protein bS6 (128 aa).

It belongs to the bacterial ribosomal protein bS6 family.

Its function is as follows. Binds together with bS18 to 16S ribosomal RNA. The polypeptide is Small ribosomal subunit protein bS6 (Geotalea uraniireducens (strain Rf4) (Geobacter uraniireducens)).